Reading from the N-terminus, the 84-residue chain is Acetylcholine receptor subunit alpha (84 aa).

2 cysteine pairs are disulfide-bonded: Cys-7–Cys-21 and Cys-71–Cys-72. A glycan (N-linked (GlcNAc...) asparagine) is linked at Asn-20.

It belongs to the ligand-gated ion channel (TC 1.A.9) family. Acetylcholine receptor (TC 1.A.9.1) subfamily. Alpha-1/CHRNA1 sub-subfamily. One of the alpha chains that assemble within the acetylcholine receptor, a pentamer of two alpha chains, a beta, a delta, and a gamma (in immature muscle) or epsilon (in mature muscle) chains. The muscle heteropentamer composed of alpha-1, beta-1, delta, epsilon subunits interacts with the alpha-conotoxin ImII.

The protein localises to the postsynaptic cell membrane. The protein resides in the cell membrane. The catalysed reaction is K(+)(in) = K(+)(out). The enzyme catalyses Na(+)(in) = Na(+)(out). Its function is as follows. Upon acetylcholine binding, the AChR responds by an extensive change in conformation that affects all subunits and leads to opening of an ion-conducting channel across the plasma membrane. The polypeptide is Acetylcholine receptor subunit alpha (CHRNA1) (Crocidura russula (Greater white-toothed shrew)).